A 256-amino-acid polypeptide reads, in one-letter code: uncharacterized protein (256 aa).

Positions 211-256 are disordered; the sequence is RKLQASVTTTPPKRCKLADRPAQTTQDTPRAPQPAPVRAQRPLFTL. Low complexity predominate over residues 246-256; it reads PVRAQRPLFTL.

This is an uncharacterized protein from Orgyia pseudotsugata (Douglas-fir tussock moth).